The sequence spans 341 residues: MNNYLRKLVEGQHLTEEEMYKAGLLLLNENILESEIAAFLVLLKAKGETAEEIYGLVRALREKALPFSNHIQGAMDNCGTGGDGAQTFNISTTSAFVLAGADVKVAKHGNRAVSSKTGSADLLEELGVNISSTPNEIDYLLEHVGIAFLFAPAMHPALKRIMKIRKELNVPTIFNLIGPLTNPVNLETQFVGIYKRDMLLPVAQVLQKLGRKQALVVNGSGFLDEASLQGENHVVILKDNEIVETSIEPEKYGFSIVKNEEIRGGNSKENAKITLGVLSGEKSVYRDTVLFNAGLALFANGKAKTIEEGITLAAHSIDSGKALAKLNLLIAASNEKLERVN.

5-phospho-alpha-D-ribose 1-diphosphate contacts are provided by residues G79, G82–D83, T87, N89–T92, K107–S115, and S119. G79 serves as a coordination point for anthranilate. S91 lines the Mg(2+) pocket. Residue N110 participates in anthranilate binding. Position 165 (R165) interacts with anthranilate. Residues D224 and E225 each contribute to the Mg(2+) site.

This sequence belongs to the anthranilate phosphoribosyltransferase family. As to quaternary structure, homodimer. The cofactor is Mg(2+).

The enzyme catalyses N-(5-phospho-beta-D-ribosyl)anthranilate + diphosphate = 5-phospho-alpha-D-ribose 1-diphosphate + anthranilate. The protein operates within amino-acid biosynthesis; L-tryptophan biosynthesis; L-tryptophan from chorismate: step 2/5. In terms of biological role, catalyzes the transfer of the phosphoribosyl group of 5-phosphorylribose-1-pyrophosphate (PRPP) to anthranilate to yield N-(5'-phosphoribosyl)-anthranilate (PRA). The sequence is that of Anthranilate phosphoribosyltransferase from Bacillus cereus (strain AH187).